A 347-amino-acid chain; its full sequence is Extracellular metalloprotease (347 aa).

The signal sequence occupies residues 1-20 (MKSRPICSVIPPYILHRIIA). The interval 43 to 68 (SHHPRPEPHEKLPAGQANRSIHDAEQ) is disordered. Histidine 162 lines the Zn(2+) pocket. Residue glutamate 163 is part of the active site. Positions 166 and 186 each coordinate Zn(2+). The Proton donor role is filled by histidine 264.

It belongs to the peptidase M4 family. It depends on Ca(2+) as a cofactor. Requires Zn(2+) as cofactor.

The protein resides in the secreted. The polypeptide is Extracellular metalloprotease (prt1) (Pectobacterium carotovorum subsp. carotovorum (Erwinia carotovora subsp. carotovora)).